A 352-amino-acid chain; its full sequence is 4-hydroxy-3-methylbut-2-enyl diphosphate reductase (352 aa).

Cys36 provides a ligand contact to [4Fe-4S] cluster. Residues His76 and His114 each coordinate (2E)-4-hydroxy-3-methylbut-2-enyl diphosphate. Residues His76 and His114 each coordinate dimethylallyl diphosphate. The isopentenyl diphosphate site is built by His76 and His114. A [4Fe-4S] cluster-binding site is contributed by Cys136. His164 provides a ligand contact to (2E)-4-hydroxy-3-methylbut-2-enyl diphosphate. His164 is a dimethylallyl diphosphate binding site. His164 is an isopentenyl diphosphate binding site. Residue Glu166 is the Proton donor of the active site. Thr204 contacts (2E)-4-hydroxy-3-methylbut-2-enyl diphosphate. Cys234 serves as a coordination point for [4Fe-4S] cluster. Ser262, Ser263, Asn264, and Ser309 together coordinate (2E)-4-hydroxy-3-methylbut-2-enyl diphosphate. Positions 262, 263, 264, and 309 each coordinate dimethylallyl diphosphate. 4 residues coordinate isopentenyl diphosphate: Ser262, Ser263, Asn264, and Ser309.

Belongs to the IspH family. [4Fe-4S] cluster serves as cofactor.

It catalyses the reaction isopentenyl diphosphate + 2 oxidized [2Fe-2S]-[ferredoxin] + H2O = (2E)-4-hydroxy-3-methylbut-2-enyl diphosphate + 2 reduced [2Fe-2S]-[ferredoxin] + 2 H(+). The enzyme catalyses dimethylallyl diphosphate + 2 oxidized [2Fe-2S]-[ferredoxin] + H2O = (2E)-4-hydroxy-3-methylbut-2-enyl diphosphate + 2 reduced [2Fe-2S]-[ferredoxin] + 2 H(+). It functions in the pathway isoprenoid biosynthesis; dimethylallyl diphosphate biosynthesis; dimethylallyl diphosphate from (2E)-4-hydroxy-3-methylbutenyl diphosphate: step 1/1. Its pathway is isoprenoid biosynthesis; isopentenyl diphosphate biosynthesis via DXP pathway; isopentenyl diphosphate from 1-deoxy-D-xylulose 5-phosphate: step 6/6. Its function is as follows. Catalyzes the conversion of 1-hydroxy-2-methyl-2-(E)-butenyl 4-diphosphate (HMBPP) into a mixture of isopentenyl diphosphate (IPP) and dimethylallyl diphosphate (DMAPP). Acts in the terminal step of the DOXP/MEP pathway for isoprenoid precursor biosynthesis. This is 4-hydroxy-3-methylbut-2-enyl diphosphate reductase from Bifidobacterium longum (strain NCC 2705).